We begin with the raw amino-acid sequence, 730 residues long: MLKTVLMPSPSKCSLMAKRDQDWSPNQLRLDILDQNARDADPRGTGFDYAEEFQELDLDAVKADLEELMTSSQDWWPADYGHYGPLFIRMAWHSAGTYRTTDGRGGASGGRQRFAPLNSWPDNANLDKARRLLWPIKKKYGRKLSWADLIVLAGNHAIESMGLKTFGWAGGREDAFEPDEAVDWGPEDEMEAHQSERRTDDGELKEPLGAAVMGLIYVDPEGPNGNPDPLASAENIRESFGRMAMNDEETAALIAGGHTFGKVHGADDPEENLGDVPEDAPIEQMGLGWENDYGSGKAGDTITSGIEGPWTQAPIEWDNGYIDNLLDYEWEPEKGPGGAWQWTPTDEALANTVPDAHDPSEKQTPMMLTTDIALKRDPDYREVMERFQENPMEFGINFARAWYKLIHRDMGPPERFLGPDAPDEEMIWQDPVPDVDHDLIGDEEVAELKTDILETDLTVSQLVKTAWASASTYRDSDKRGGANGARIRLEPQKNWEVNEPAQLETVLATLEEIQAEFNSARTDDTRVSLADLIVLGGNAAVEQAAADAGYDVTVPFEPGRTDATPEQTDVDSFEALKPRADGFRNYARDDVDVPAEELLVDRADLLDLTPEEMTVLVGGLRSLGATYQDSDLGVFTDEPGTLTNDFFEVVLGMDTEWEPVSESKDVFEGYDRETGEQTWAASRVDLIFGSHSRLRAIAEVYGADGAEAELVDDFVDAWHKVMRLDRFDLE.

Residues 92–217 constitute a cross-link (tryptophyl-tyrosyl-methioninium (Trp-Tyr) (with M-243)); sequence WHSAGTYRTT…LGAAVMGLIY (126 aa). His-93 functions as the Proton acceptor in the catalytic mechanism. Positions 217–243 form a cross-link, tryptophyl-tyrosyl-methioninium (Tyr-Met) (with W-92); sequence YVDPEGPNGNPDPLASAENIRESFGRM. His-258 is a heme b binding site.

This sequence belongs to the peroxidase family. Peroxidase/catalase subfamily. Homodimer or homotetramer. The cofactor is heme b. In terms of processing, formation of the three residue Trp-Tyr-Met cross-link is important for the catalase, but not the peroxidase activity of the enzyme.

It carries out the reaction H2O2 + AH2 = A + 2 H2O. It catalyses the reaction 2 H2O2 = O2 + 2 H2O. Bifunctional enzyme with both catalase and broad-spectrum peroxidase activity. The sequence is that of Catalase-peroxidase 1 from Haloarcula marismortui (strain ATCC 43049 / DSM 3752 / JCM 8966 / VKM B-1809) (Halobacterium marismortui).